The sequence spans 183 residues: Ribosome-recycling factor (183 aa).

This sequence belongs to the RRF family.

It is found in the cytoplasm. Responsible for the release of ribosomes from messenger RNA at the termination of protein biosynthesis. May increase the efficiency of translation by recycling ribosomes from one round of translation to another. This is Ribosome-recycling factor from Afipia carboxidovorans (strain ATCC 49405 / DSM 1227 / KCTC 32145 / OM5) (Oligotropha carboxidovorans).